Reading from the N-terminus, the 172-residue chain is Nicotinamide-nucleotide adenylyltransferase (172 aa).

It belongs to the archaeal NMN adenylyltransferase family.

The protein resides in the cytoplasm. It carries out the reaction beta-nicotinamide D-ribonucleotide + ATP + H(+) = diphosphate + NAD(+). Its pathway is cofactor biosynthesis; NAD(+) biosynthesis; NAD(+) from nicotinamide D-ribonucleotide: step 1/1. The protein is Nicotinamide-nucleotide adenylyltransferase of Aeropyrum pernix (strain ATCC 700893 / DSM 11879 / JCM 9820 / NBRC 100138 / K1).